A 323-amino-acid chain; its full sequence is tRNA U34 carboxymethyltransferase (323 aa).

Carboxy-S-adenosyl-L-methionine-binding positions include K91, W105, K110, G130, 181-182 (IE), M196, Y200, and R315.

The protein belongs to the class I-like SAM-binding methyltransferase superfamily. CmoB family. Homotetramer.

It carries out the reaction carboxy-S-adenosyl-L-methionine + 5-hydroxyuridine(34) in tRNA = 5-carboxymethoxyuridine(34) in tRNA + S-adenosyl-L-homocysteine + H(+). Catalyzes carboxymethyl transfer from carboxy-S-adenosyl-L-methionine (Cx-SAM) to 5-hydroxyuridine (ho5U) to form 5-carboxymethoxyuridine (cmo5U) at position 34 in tRNAs. In Yersinia pseudotuberculosis serotype IB (strain PB1/+), this protein is tRNA U34 carboxymethyltransferase.